The following is a 247-amino-acid chain: MCRDVNVYYGEKHAIQNVSLDVGHNEVIALIGPSGCGKSTFLRCLNRMNDTIVGCRVTGSIRLDGQDIYDGGLDVVPLRAQVGMVFQKPNPFPKSIYENVAYGPKIHGLANSKAELEEIVESSLRRAGLWDEVKDDLAKPGTSLSGGQQQRLCIARTIAVSPEVILMDEPCSALDPIATAKIEQLIDELRELYTIAIVTHSMQQAARVSQRTAYFHLGRLIEVGDTAQVFTNPRHPLTEDYITGRFG.

The 241-residue stretch at 2–242 (CRDVNVYYGE…PRHPLTEDYI (241 aa)) folds into the ABC transporter domain. 32-39 (GPSGCGKS) contacts ATP.

It belongs to the ABC transporter superfamily. Phosphate importer (TC 3.A.1.7) family. The complex is composed of two ATP-binding proteins (PstB), two transmembrane proteins (PstC and PstA) and a solute-binding protein (PstS).

It is found in the cell inner membrane. The catalysed reaction is phosphate(out) + ATP + H2O = ADP + 2 phosphate(in) + H(+). Functionally, part of the ABC transporter complex PstSACB involved in phosphate import. Responsible for energy coupling to the transport system. The chain is Phosphate import ATP-binding protein PstB from Methylococcus capsulatus (strain ATCC 33009 / NCIMB 11132 / Bath).